The following is a 391-amino-acid chain: Suppressor APC domain-containing protein 2 (391 aa).

A disordered region spans residues 1-20 (MAVAAMAERGRLSHAAPAPS). T218 carries the phosphothreonine modification. Residues 226–277 (SLLKQMKELDQEQEVLLQGLEMMARGRDWYQQQLQRVQERQRRLSQSRAAAD) adopt a coiled-coil conformation. S283 bears the Phosphoserine mark. Residues 340–381 (LKEQNRLLTQEVTDKSERITQLEQEKSALIKQLFEARALSQQ) adopt a coiled-coil conformation.

Interacts with a spindle orientation complex at least composed of GNAI1, GPSM2 and NUMA1. Interacts with GPSM2 (via TPR motifs); this interaction is required to prevent GPSM2 anchoring at the mitotic apical cortex and is inhibited in presence of NUMA1 in a dose dependent manner. Interacts with PARD3. In terms of tissue distribution, expressed in the retina. Expressed in retinal progenitor cells and newly differentiated neurons but not in mature retinal cells (at protein level).

It localises to the cytoplasm. It is found in the nucleus. The protein resides in the cell cortex. The protein localises to the apical cell membrane. Its subcellular location is the cell junction. It localises to the tight junction. In terms of biological role, plays a role in planar mitotic spindle orientation in retinal progenitor cells (RPCs) and promotes the production of symmetric terminal divisions. Negatively regulates the mitotic apical cortex localization of GPSM2. Involved also in positive regulation of cell proliferation and tumor cell growth. This Mus musculus (Mouse) protein is Suppressor APC domain-containing protein 2.